A 455-amino-acid chain; its full sequence is Bifunctional protein GlmU (455 aa).

The interval 1–230 is pyrophosphorylase; sequence MTKRNAIILA…FDESMGVNDR (230 aa). UDP-N-acetyl-alpha-D-glucosamine contacts are provided by residues 9 to 12, lysine 23, glutamine 73, 78 to 79, 101 to 103, glycine 140, glutamate 155, asparagine 170, and asparagine 228; these read LAAG, GT, and SGD. Position 103 (aspartate 103) interacts with Mg(2+). Asparagine 228 serves as a coordination point for Mg(2+). The interval 231 to 251 is linker; it reads VALARANKVMRNRINTHWMRE. Positions 252-455 are N-acetyltransferase; that stretch reads GVSMIDPETT…KENYAKKLPW (204 aa). The UDP-N-acetyl-alpha-D-glucosamine site is built by arginine 333 and lysine 351. Histidine 363 (proton acceptor) is an active-site residue. UDP-N-acetyl-alpha-D-glucosamine-binding residues include tyrosine 366 and asparagine 377. Acetyl-CoA contacts are provided by residues 386–387, serine 405, alanine 423, and arginine 440; that span reads NY.

This sequence in the N-terminal section; belongs to the N-acetylglucosamine-1-phosphate uridyltransferase family. It in the C-terminal section; belongs to the transferase hexapeptide repeat family. Homotrimer. It depends on Mg(2+) as a cofactor.

The protein localises to the cytoplasm. It catalyses the reaction alpha-D-glucosamine 1-phosphate + acetyl-CoA = N-acetyl-alpha-D-glucosamine 1-phosphate + CoA + H(+). It carries out the reaction N-acetyl-alpha-D-glucosamine 1-phosphate + UTP + H(+) = UDP-N-acetyl-alpha-D-glucosamine + diphosphate. The protein operates within nucleotide-sugar biosynthesis; UDP-N-acetyl-alpha-D-glucosamine biosynthesis; N-acetyl-alpha-D-glucosamine 1-phosphate from alpha-D-glucosamine 6-phosphate (route II): step 2/2. It functions in the pathway nucleotide-sugar biosynthesis; UDP-N-acetyl-alpha-D-glucosamine biosynthesis; UDP-N-acetyl-alpha-D-glucosamine from N-acetyl-alpha-D-glucosamine 1-phosphate: step 1/1. It participates in bacterial outer membrane biogenesis; LPS lipid A biosynthesis. In terms of biological role, catalyzes the last two sequential reactions in the de novo biosynthetic pathway for UDP-N-acetylglucosamine (UDP-GlcNAc). The C-terminal domain catalyzes the transfer of acetyl group from acetyl coenzyme A to glucosamine-1-phosphate (GlcN-1-P) to produce N-acetylglucosamine-1-phosphate (GlcNAc-1-P), which is converted into UDP-GlcNAc by the transfer of uridine 5-monophosphate (from uridine 5-triphosphate), a reaction catalyzed by the N-terminal domain. In Limosilactobacillus reuteri (strain DSM 20016) (Lactobacillus reuteri), this protein is Bifunctional protein GlmU.